The sequence spans 504 residues: Zinc finger CCCH-type with G patch domain-containing protein (504 aa).

The interval Leu-95–Gly-121 is disordered. Acidic residues predominate over residues Asp-107–Asp-118. The C3H1-type zinc-finger motif lies at Lys-165–Val-191. Residues Thr-308–Glu-354 form the G-patch domain.

It is found in the nucleus. Its function is as follows. Transcription repressor that specifically binds the 5'-GGAG[GA]A[GA]A-3' consensus sequence. Represses transcription by recruiting the chromatin multiprotein complex NuRD to target promoters. Negatively regulates expression of EGFR, a gene involved in cell proliferation, survival and migration. This chain is Zinc finger CCCH-type with G patch domain-containing protein (zgpat), found in Danio rerio (Zebrafish).